Here is a 243-residue protein sequence, read N- to C-terminus: DNA repair protein RecO (243 aa).

This sequence belongs to the RecO family.

Its function is as follows. Involved in DNA repair and RecF pathway recombination. This Azoarcus sp. (strain BH72) protein is DNA repair protein RecO.